A 615-amino-acid chain; its full sequence is Probable ATP-citrate synthase subunit 1 (615 aa).

ATP-binding positions include 221–241 (LIRFEADPACKLMVLLGEVGG) and 272–298 (FKTEVQFGHAGSFANSELETAVAKNQA). Glu-238 is a binding site for Mg(2+). The Tele-phosphohistidine intermediate role is filled by His-280. CoA is bound at residue 299-309 (MREAGIYVPET). Phosphoserine is present on Ser-359.

This sequence belongs to the succinate/malate CoA ligase alpha subunit family. In terms of assembly, composed of two subunits.

The protein localises to the cytoplasm. The enzyme catalyses oxaloacetate + acetyl-CoA + ADP + phosphate = citrate + ATP + CoA. Catalyzes the formation of cytosolic acetyl-CoA, which is mainly used for the biosynthesis of fatty acids and sterols. This Schizosaccharomyces pombe (strain 972 / ATCC 24843) (Fission yeast) protein is Probable ATP-citrate synthase subunit 1.